Consider the following 37-residue polypeptide: Large ribosomal subunit protein bL36 (37 aa).

The protein belongs to the bacterial ribosomal protein bL36 family.

The sequence is that of Large ribosomal subunit protein bL36 from Thermosynechococcus vestitus (strain NIES-2133 / IAM M-273 / BP-1).